The sequence spans 203 residues: Translation initiation factor IF-3 (203 aa).

Residues 172–182 (EAPKNEKKTKE) are compositionally biased toward basic and acidic residues. Residues 172–203 (EAPKNEKKTKENNPPFNRINLMKGENHAKNED) are disordered.

It belongs to the IF-3 family. As to quaternary structure, monomer.

Its subcellular location is the cytoplasm. In terms of biological role, IF-3 binds to the 30S ribosomal subunit and shifts the equilibrium between 70S ribosomes and their 50S and 30S subunits in favor of the free subunits, thus enhancing the availability of 30S subunits on which protein synthesis initiation begins. The chain is Translation initiation factor IF-3 from Helicobacter pylori (strain J99 / ATCC 700824) (Campylobacter pylori J99).